The primary structure comprises 411 residues: 2,3-bisphosphoglycerate-independent phosphoglycerate mutase (411 aa).

Belongs to the BPG-independent phosphoglycerate mutase family. A-PGAM subfamily.

The enzyme catalyses (2R)-2-phosphoglycerate = (2R)-3-phosphoglycerate. Its pathway is carbohydrate degradation; glycolysis; pyruvate from D-glyceraldehyde 3-phosphate: step 3/5. Catalyzes the interconversion of 2-phosphoglycerate and 3-phosphoglycerate. This chain is 2,3-bisphosphoglycerate-independent phosphoglycerate mutase, found in Pyrobaculum arsenaticum (strain DSM 13514 / JCM 11321 / PZ6).